The primary structure comprises 135 residues: Putative pre-16S rRNA nuclease (135 aa).

Belongs to the YqgF nuclease family.

It localises to the cytoplasm. Could be a nuclease involved in processing of the 5'-end of pre-16S rRNA. This is Putative pre-16S rRNA nuclease from Christiangramia forsetii (strain DSM 17595 / CGMCC 1.15422 / KT0803) (Gramella forsetii).